A 225-amino-acid polypeptide reads, in one-letter code: Germin-like protein 3-1 (225 aa).

The signal sequence occupies residues 1-22 (MRAAVAHRILLSLALFAVLCRC). An intrachain disulfide couples Cys31 to Cys51. In terms of domain architecture, Cupin type-1 spans 65-216 (SALSRATNPA…AFKITGQDVQ (152 aa)). Asn81 carries an N-linked (GlcNAc...) asparagine glycan. The Mn(2+) site is built by His115, His117, Glu122, and His161.

It belongs to the germin family. As to quaternary structure, oligomer (believed to be a pentamer but probably hexamer).

The protein resides in the secreted. The protein localises to the extracellular space. It is found in the apoplast. Functionally, may play a role in plant defense. Probably has no oxalate oxidase activity even if the active site is conserved. This chain is Germin-like protein 3-1, found in Oryza sativa subsp. japonica (Rice).